Reading from the N-terminus, the 1111-residue chain is Zinc finger protein GLI1 (1111 aa).

Residues 52–78 (GYGAARETSSCTEGSLFPPPPPPRSSV) are disordered. The interaction with SUFU stretch occupies residues 123–127 (SYGHL). 5 C2H2-type zinc fingers span residues 238-263 (TDCR…NSEH), 271-298 (FVCH…MRRH), 304-328 (HKCT…LRSH), 334-359 (YMCE…NRTH), and 365-390 (YVCK…KTVH). Positions 286-294 (KAQYMLVVH) are interaction with DNA. 2 interaction with DNA regions span residues 348 to 353 (ASDRAK) and 378 to 384 (DPSSLRK). The disordered stretch occupies residues 378–487 (DPSSLRKHVK…EDLSSLDEGP (110 aa)). The segment covering 416 to 431 (EPKREREGGSGREESR) has biased composition (basic and acidic residues). The segment covering 439–465 (MPQQSPGAQSSCSSDHSPAGSAANTDS) has biased composition (polar residues). An N6-acetyllysine modification is found at Lys-520. 4 disordered regions span residues 528–583 (GAPV…LPGL), 598–649 (ARGS…RAAD), 673–692 (TGRN…QPPS), and 832–891 (PCLN…SSHS). The segment covering 546–562 (SSSSSMSSAYTVSRRSS) has biased composition (low complexity). Positions 640-649 (RASDPARAAD) are enriched in basic and acidic residues. Residues 855–870 (LPQPQYPQSGPYPQPP) show a composition bias toward pro residues. Residue Lys-1008 forms a Glycyl lysine isopeptide (Lys-Gly) (interchain with G-Cter in SUMO2) linkage. Residues 1064–1093 (LSPPLSHEQGDSSKNTPSPSGPPNMAVGNM) form a disordered region.

This sequence belongs to the GLI C2H2-type zinc-finger protein family. As to quaternary structure, interacts with KIF7. Interacts with STK36. Interacts with ZIC1; the interaction enhances transcription activation. Interacts with SUFU; this inhibits transcriptional activation by GLI1. In terms of processing, phosphorylated in vitro by ULK3. Post-translationally, acetylation at Lys-520 down-regulates transcriptional activity. Deacetylated by HDAC1. Ubiquitinated by the CRL2(FEM1B) complex, suppressing GLI1 transcriptional activator activity.

It is found in the cytoplasm. Its subcellular location is the nucleus. Its function is as follows. Acts as a transcriptional activator. Binds to the DNA consensus sequence 5'-GACCACCCA-3'. Regulates the transcription of specific genes during normal development. Plays a role in craniofacial development and digital development, as well as development of the central nervous system and gastrointestinal tract. Mediates SHH signaling. Plays a role in cell proliferation and differentiation via its role in SHH signaling. The sequence is that of Zinc finger protein GLI1 (Gli1) from Mus musculus (Mouse).